The primary structure comprises 36 residues: Asteropin-A (36 aa).

Intrachain disulfides connect C2–C18, C9–C25, and C17–C35.

In terms of biological role, sialidase inhibitor. Competitively inhibits bacterial sialidases, but not viral sialidases. Does not inhibit glycosidases or proteases. Has no antitumor activity. This chain is Asteropin-A, found in Asteropus simplex (Marine sponge).